The primary structure comprises 341 residues: HTH-type transcriptional repressor PurR (341 aa).

The HTH lacI-type domain occupies 2-56; the sequence is ATIKDVAKRANVSTTTVSHVINKTRFVAEETRNAVWAAIKELHYSPSAVARSLKV. Residues 4–23 constitute a DNA-binding region (H-T-H motif); sequence IKDVAKRANVSTTTVSHVIN. A DNA-binding region spans residues 48–56; the sequence is SAVARSLKV. Tyr73, Arg190, Thr192, Phe221, and Asp275 together coordinate hypoxanthine.

Homodimer.

It functions in the pathway purine metabolism; purine nucleotide biosynthesis [regulation]. Is the main repressor of the genes involved in the de novo synthesis of purine nucleotides, regulating purB, purC, purEK, purF, purHD, purL, purMN and guaBA expression. PurR is allosterically activated to bind its cognate DNA by binding the purine corepressors, hypoxanthine or guanine, thereby effecting transcription repression. The sequence is that of HTH-type transcriptional repressor PurR from Escherichia fergusonii (strain ATCC 35469 / DSM 13698 / CCUG 18766 / IAM 14443 / JCM 21226 / LMG 7866 / NBRC 102419 / NCTC 12128 / CDC 0568-73).